The primary structure comprises 1024 residues: Multidrug resistance protein MdtC (1024 aa).

The next 12 helical transmembrane spans lie at 12-32 (VATT…FSLL), 333-353 (EVER…FIFL), 360-380 (LIPA…MYLC), 387-407 (LSLM…IVVL), 435-455 (VLSM…MAGL), 469-489 (VAIG…CAWL), 528-548 (WVMV…ISIP), 853-873 (LWLI…LYES), 875-895 (VHPL…LLAL), 897-917 (LFDA…IGIV), 953-973 (PIIM…LSSG), and 984-1004 (ITIV…TPVI).

It belongs to the resistance-nodulation-cell division (RND) (TC 2.A.6) family. MdtC subfamily. Part of a tripartite efflux system composed of MdtA, MdtB and MdtC. MdtC forms a heteromultimer with MdtB.

It localises to the cell inner membrane. The chain is Multidrug resistance protein MdtC from Yersinia pseudotuberculosis serotype O:1b (strain IP 31758).